Consider the following 168-residue polypeptide: Large ribosomal subunit protein uL10 (168 aa).

This sequence belongs to the universal ribosomal protein uL10 family. As to quaternary structure, part of the ribosomal stalk of the 50S ribosomal subunit. The N-terminus interacts with L11 and the large rRNA to form the base of the stalk. The C-terminus forms an elongated spine to which L12 dimers bind in a sequential fashion forming a multimeric L10(L12)X complex.

Functionally, forms part of the ribosomal stalk, playing a central role in the interaction of the ribosome with GTP-bound translation factors. This is Large ribosomal subunit protein uL10 (rplJ) from Buchnera aphidicola subsp. Baizongia pistaciae (strain Bp).